The sequence spans 1774 residues: Receptor-mediated endocytosis protein 6 homolog (1774 aa).

The region spanning 157–396 is the Ras-GAP domain; it reads ELLLKLLREL…EDVVAILPQQ (240 aa). Disordered regions lie at residues 444–480, 517–564, 661–727, 784–811, 869–947, 983–1102, 1115–1142, and 1214–1342; these read IPKQ…NNRS, PLAN…PAPT, AAHS…HHHG, ENTL…RNFS, AEID…EDSA, ESSF…EEQP, QEEQ…SMEQ, and RAGA…GGRS. Low complexity-rich tracts occupy residues 519–533 and 540–557; these read ANGQ…SASN and SSHS…AAPA. Basic and acidic residues predominate over residues 674-683; it reads QQERDVHENE. The span at 688 to 713 shows a compositional bias: polar residues; it reads DMVSANVSGRGTPNISGRDTPSSQVT. Residues 794–809 show a composition bias toward basic and acidic residues; it reads RGGDRGDRGDRDRDRN. Over residues 887-905 the composition is skewed to gly residues; it reads PGSGGGAGVPEAGGGGGVV. Basic and acidic residues predominate over residues 929–944; the sequence is DPDRERLRNGSERSQE. A compositionally biased stretch (polar residues) spans 1011–1027; sequence MRRQTSAESSISNQSLN. The span at 1038–1047 shows a compositional bias: basic residues; sequence LAKHHHHHQH. Basic and acidic residues predominate over residues 1048–1060; it reads RDRDRDRDRDRDH. The segment covering 1061–1076 has biased composition (basic residues); it reads REHHHKSAALKKKKHQ. Residues 1077 to 1087 show a composition bias toward basic and acidic residues; it reads EHKEHQHRDLI. Residues 1091–1101 show a composition bias toward acidic residues; the sequence is DCSEDKDEEEQ. A compositionally biased stretch (low complexity) spans 1115–1125; it reads QEEQQQQQQQQ. The segment covering 1246–1291 has biased composition (basic and acidic residues); the sequence is SADKEQQPYRDRERERDRERDRERDRDRERDRDRDRDRDRDREHHS. A compositionally biased stretch (low complexity) spans 1310–1335; that stretch reads SSSSKNNAIAIAAPSSINPNPSPSSA. A coiled-coil region spans residues 1516 to 1546; it reads RHRQQLLLRSEQLEQLEVRLRSEARSCQRCL. Residues 1635 to 1774 enclose the VPS9 domain; that stretch reads VSRDTVLSAH…KFIKTMDYLD (140 aa).

The protein belongs to the GAPVD1 family.

It is found in the membrane. Acts both as a GTPase-activating protein (GAP) and a guanine nucleotide exchange factor (GEF), and participates in endocytosis. This is Receptor-mediated endocytosis protein 6 homolog from Drosophila pseudoobscura pseudoobscura (Fruit fly).